We begin with the raw amino-acid sequence, 75 residues long: DNA-directed RNA polymerase subunit epsilon (75 aa).

This sequence belongs to the RNA polymerase subunit epsilon family. RNAP is composed of a core of 2 alpha, a beta and a beta' subunit. The core is associated with a delta subunit, and at least one of epsilon or omega. When a sigma factor is associated with the core the holoenzyme is formed, which can initiate transcription.

It catalyses the reaction RNA(n) + a ribonucleoside 5'-triphosphate = RNA(n+1) + diphosphate. Its function is as follows. A non-essential component of RNA polymerase (RNAP). The sequence is that of DNA-directed RNA polymerase subunit epsilon from Lactobacillus gasseri (strain ATCC 33323 / DSM 20243 / BCRC 14619 / CIP 102991 / JCM 1131 / KCTC 3163 / NCIMB 11718 / NCTC 13722 / AM63).